Reading from the N-terminus, the 311-residue chain is Bifunctional protein FolD (311 aa).

Residues 184–186, Ile209, and Ile250 each bind NADP(+); that span reads GAS.

It belongs to the tetrahydrofolate dehydrogenase/cyclohydrolase family. Homodimer.

The catalysed reaction is (6R)-5,10-methylene-5,6,7,8-tetrahydrofolate + NADP(+) = (6R)-5,10-methenyltetrahydrofolate + NADPH. The enzyme catalyses (6R)-5,10-methenyltetrahydrofolate + H2O = (6R)-10-formyltetrahydrofolate + H(+). It participates in one-carbon metabolism; tetrahydrofolate interconversion. Its function is as follows. Catalyzes the oxidation of 5,10-methylenetetrahydrofolate to 5,10-methenyltetrahydrofolate and then the hydrolysis of 5,10-methenyltetrahydrofolate to 10-formyltetrahydrofolate. This Gluconacetobacter diazotrophicus (strain ATCC 49037 / DSM 5601 / CCUG 37298 / CIP 103539 / LMG 7603 / PAl5) protein is Bifunctional protein FolD.